Consider the following 449-residue polypeptide: GTPase Der (449 aa).

2 consecutive EngA-type G domains span residues P4–E169 and I177–R353. Residues G10–S17, D57–L61, N120–E123, G183–S190, D230–I234, and N295–D298 each bind GTP. In terms of domain architecture, KH-like spans R354 to K439.

Belongs to the TRAFAC class TrmE-Era-EngA-EngB-Septin-like GTPase superfamily. EngA (Der) GTPase family. Associates with the 50S ribosomal subunit.

GTPase that plays an essential role in the late steps of ribosome biogenesis. This chain is GTPase Der, found in Thermosynechococcus vestitus (strain NIES-2133 / IAM M-273 / BP-1).